A 233-amino-acid polypeptide reads, in one-letter code: 3-dehydroquinate dehydratase (233 aa).

3-dehydroquinate is bound by residues 34 to 36 (ELR) and arginine 64. Histidine 118 acts as the Proton donor/acceptor in catalysis. Catalysis depends on lysine 145, which acts as the Schiff-base intermediate with substrate. 3-dehydroquinate contacts are provided by arginine 185, serine 205, and glutamine 209.

The protein belongs to the type-I 3-dehydroquinase family. In terms of assembly, homodimer.

The catalysed reaction is 3-dehydroquinate = 3-dehydroshikimate + H2O. It functions in the pathway metabolic intermediate biosynthesis; chorismate biosynthesis; chorismate from D-erythrose 4-phosphate and phosphoenolpyruvate: step 3/7. Its function is as follows. Involved in the third step of the chorismate pathway, which leads to the biosynthesis of aromatic amino acids. Catalyzes the cis-dehydration of 3-dehydroquinate (DHQ) and introduces the first double bond of the aromatic ring to yield 3-dehydroshikimate. The protein is 3-dehydroquinate dehydratase of Coxiella burnetii (strain CbuK_Q154) (Coxiella burnetii (strain Q154)).